A 409-amino-acid chain; its full sequence is MDKLLERFLHYVSLDTQSKSGVRQVPSTEGQWKLLRLLKQQLEEMGLVNITLSEKGTLMATLPANVEGDIPAIGFISHVDTSPDFSGKNVNPQIVENYRGGDIALGIGDEVLSPVMFPVLHQLLGQTLITTDGKTLLGADDKAGVAEIMTALAVLKGNPIPHGEINVAFTPDEEVGKGAKHFDVEAFGAQWAYTVDGGGVGELEFENFNAASVNIKIVGNNVHPGTAKGVMVNALSLAARIHAEVPADEAPETTEGYEGFYHLASMKGTVDRAEMHYIIRDFDRKQFEARKRKMMEIAKKVGKGLHPDCYIELVIEDSYYNMREKVVEHPHILDIAQQAMRDCHITPEMKPIRGGTDGVQLSFMGLPCPNLFTGGYNYHGKHEFVTLEGMEKAVQVIVRIAELTAKRGQ.

Histidine 78 provides a ligand contact to Zn(2+). The active site involves aspartate 80. Aspartate 140 lines the Zn(2+) pocket. Glutamate 173 functions as the Proton acceptor in the catalytic mechanism. Glutamate 174, aspartate 196, and histidine 379 together coordinate Zn(2+).

The protein belongs to the peptidase M20B family. Zn(2+) serves as cofactor.

It localises to the cytoplasm. It catalyses the reaction Release of the N-terminal residue from a tripeptide.. In terms of biological role, cleaves the N-terminal amino acid of tripeptides. This is Peptidase T from Salmonella paratyphi C (strain RKS4594).